The following is a 111-amino-acid chain: Auxin-repressed 12.5 kDa protein (111 aa).

The segment at 18-111 (ERGLGMLRKV…SGETRSKHHR (94 aa)) is disordered. The span at 43–57 (TMPTTPTTPVTPTTP) shows a compositional bias: low complexity. Polar residues predominate over residues 74–95 (SNLSSKTMGNQVFDSPQPNSPT).

Belongs to the DRM1/ARP family.

This chain is Auxin-repressed 12.5 kDa protein, found in Fragaria ananassa (Strawberry).